The primary structure comprises 609 residues: ATP-dependent lipid A-core flippase (609 aa).

6 helical membrane passes run 47-67, 88-108, 167-187, 190-210, 279-299, and 305-325; these read LLAA…IYLI, ILML…VGSF, AIIT…VMFV, WQLS…ISII, VIQI…AIFG, and GSSW…AAIL. The ABC transmembrane type-1 domain occupies 47–340; that stretch reads LLAAIGSIFF…LTKVNVVIQK (294 aa). The region spanning 372 to 606 is the ABC transporter domain; it reads VTIKDLSFAF…GGLYTRLYQS (235 aa). 404 to 411 contacts ATP; that stretch reads GKSGSGKT.

Belongs to the ABC transporter superfamily. Lipid exporter (TC 3.A.1.106) family. Homodimer.

It is found in the cell inner membrane. It catalyses the reaction ATP + H2O + lipid A-core oligosaccharideSide 1 = ADP + phosphate + lipid A-core oligosaccharideSide 2.. Functionally, involved in lipopolysaccharide (LPS) biosynthesis. Translocates lipid A-core from the inner to the outer leaflet of the inner membrane. Transmembrane domains (TMD) form a pore in the inner membrane and the ATP-binding domain (NBD) is responsible for energy generation. In Francisella tularensis subsp. tularensis (strain FSC 198), this protein is ATP-dependent lipid A-core flippase.